Consider the following 262-residue polypeptide: MSDILDKILSVKRDEVAAGSVARPLAQVRAEVEALAAPRNFVGAIRAKIAAGDAAVIAEIKKASPSKGVIREDFRPAEIALQYERGGAACLSVLTDRQFFQGAPAYLQAARAACSLPVLRKDFLVDPWQVYEARAMGADAVLLIVAALDLAAMRDMEAVAGSLGMAVLVEAHDAAELDVALQLSTPLVGINNRNLRTFDVSLQTTLDLLARVPAGRIVVTESGILAPADVALMRANAVNAFLVGEAFMRVPDPGEGLRSLFG.

It belongs to the TrpC family.

The catalysed reaction is 1-(2-carboxyphenylamino)-1-deoxy-D-ribulose 5-phosphate + H(+) = (1S,2R)-1-C-(indol-3-yl)glycerol 3-phosphate + CO2 + H2O. The protein operates within amino-acid biosynthesis; L-tryptophan biosynthesis; L-tryptophan from chorismate: step 4/5. This chain is Indole-3-glycerol phosphate synthase, found in Aromatoleum aromaticum (strain DSM 19018 / LMG 30748 / EbN1) (Azoarcus sp. (strain EbN1)).